Consider the following 159-residue polypeptide: Ribosomal RNA large subunit methyltransferase H (159 aa).

Residues L76, G108, and 127–132 (FSKMTF) contribute to the S-adenosyl-L-methionine site.

The protein belongs to the RNA methyltransferase RlmH family. Homodimer.

It localises to the cytoplasm. It catalyses the reaction pseudouridine(1915) in 23S rRNA + S-adenosyl-L-methionine = N(3)-methylpseudouridine(1915) in 23S rRNA + S-adenosyl-L-homocysteine + H(+). Specifically methylates the pseudouridine at position 1915 (m3Psi1915) in 23S rRNA. The chain is Ribosomal RNA large subunit methyltransferase H from Staphylococcus carnosus (strain TM300).